Consider the following 75-residue polypeptide: UPF0352 protein plu2871 (75 aa).

This sequence belongs to the UPF0352 family.

This is UPF0352 protein plu2871 from Photorhabdus laumondii subsp. laumondii (strain DSM 15139 / CIP 105565 / TT01) (Photorhabdus luminescens subsp. laumondii).